The primary structure comprises 732 residues: Prolyl tripeptidyl peptidase (732 aa).

Positions 1–24 (MKKTIFQQLFLSVCALTVALPCSA) are cleaved as a signal peptide. Catalysis depends on charge relay system residues Ser-603, Asp-678, and His-710.

This sequence belongs to the peptidase S9B family. The N-terminus is blocked.

The enzyme catalyses Hydrolysis of Xaa-Xaa-Pro-|-Yaa- releasing the N-terminal tripeptide of a peptide with Pro as the third residue (position P1) and where Yaa is not proline.. Strongly inhibited by diisopropyl fluorophosphate and Pefabloc. Weakly inhibited by 3,4-dichloroisocumarin. Not inhibited by phenylmethylsulfonyl fluoride, leupeptin, antipain or prolinal. Activated by iodoacetamide. In terms of biological role, serine proteinase. Releases tripeptides from the free amino terminus of proteins. Has a requirement for Pro in the P1 position, but is inactivated by Pro in the P1' position. This is Prolyl tripeptidyl peptidase from Porphyromonas gingivalis (strain ATCC BAA-308 / W83).